The chain runs to 261 residues: Phosphoribosylaminoimidazole-succinocarboxamide synthase (261 aa).

Belongs to the SAICAR synthetase family.

The enzyme catalyses 5-amino-1-(5-phospho-D-ribosyl)imidazole-4-carboxylate + L-aspartate + ATP = (2S)-2-[5-amino-1-(5-phospho-beta-D-ribosyl)imidazole-4-carboxamido]succinate + ADP + phosphate + 2 H(+). Its pathway is purine metabolism; IMP biosynthesis via de novo pathway; 5-amino-1-(5-phospho-D-ribosyl)imidazole-4-carboxamide from 5-amino-1-(5-phospho-D-ribosyl)imidazole-4-carboxylate: step 1/2. This chain is Phosphoribosylaminoimidazole-succinocarboxamide synthase, found in Novosphingobium aromaticivorans (strain ATCC 700278 / DSM 12444 / CCUG 56034 / CIP 105152 / NBRC 16084 / F199).